We begin with the raw amino-acid sequence, 308 residues long: Cis-prenyltransferase 4, chloroplastic (308 aa).

The transit peptide at 1 to 45 (MAFSLQLQQIFVSYTRFCSQPKSITNPLISLKLPSIHPLAFAQNA) directs the protein to the chloroplast. D84 is a catalytic residue.

The protein belongs to the UPP synthase family. Mg(2+) serves as cofactor. In terms of tissue distribution, widely expressed.

It is found in the plastid. The protein localises to the chloroplast. Functionally, uses neryl diphosphate and geranyl diphosphate to catalyze the cis-prenyl chain elongation and produce polyprenyl diphosphate with a chain of 55 carbons. This Solanum lycopersicum (Tomato) protein is Cis-prenyltransferase 4, chloroplastic.